The primary structure comprises 111 residues: Movement protein TGB2 (111 aa).

At 1–16 (MSSHQNFLTPPPDHSK) the chain is on the cytoplasmic side. The chain crosses the membrane as a helical span at residues 17 to 37 (AILAVAVGVGLAIVLHFSLSY). Residues 38–72 (KLPSPGDNIHSLPFGGTYRDGTKSIIYNSPHRGPG) lie on the Lumenal side of the membrane. The chain crosses the membrane as a helical span at residues 73–93 (QSGALPIITVFAIIECTLHVL). The Cytoplasmic segment spans residues 94 to 111 (RKRDNPVRPQHSDCPNCS).

It belongs to the Tymovirales TGBp2 protein family.

The protein localises to the host endoplasmic reticulum membrane. Functionally, plays a role in viral cell-to-cell propagation, by facilitating genome transport to neighboring plant cells through plasmosdesmata,. The chain is Movement protein TGB2 from Carica papaya (Papaya).